Reading from the N-terminus, the 119-residue chain is Large ribosomal subunit protein uL18 (119 aa).

Belongs to the universal ribosomal protein uL18 family. Part of the 50S ribosomal subunit; part of the 5S rRNA/L5/L18/L25 subcomplex. Contacts the 5S and 23S rRNAs.

In terms of biological role, this is one of the proteins that bind and probably mediate the attachment of the 5S RNA into the large ribosomal subunit, where it forms part of the central protuberance. The chain is Large ribosomal subunit protein uL18 from Clostridium beijerinckii (strain ATCC 51743 / NCIMB 8052) (Clostridium acetobutylicum).